Reading from the N-terminus, the 221-residue chain is Pectate lyase C (221 aa).

The first 28 residues, 1-28 (MKRLAGTVILSGLLVCGFGQALPEKALA), serve as a signal peptide directing secretion.

Belongs to the polysaccharide lyase 3 family. It depends on Ca(2+) as a cofactor.

It localises to the secreted. The catalysed reaction is Eliminative cleavage of (1-&gt;4)-alpha-D-galacturonan to give oligosaccharides with 4-deoxy-alpha-D-galact-4-enuronosyl groups at their non-reducing ends.. It carries out the reaction Eliminative cleavage of (1-&gt;4)-alpha-D-galacturonan methyl ester to give oligosaccharides with 4-deoxy-6-O-methyl-alpha-D-galact-4-enuronosyl groups at their non-reducing ends.. Its pathway is glycan metabolism; pectin degradation; 2-dehydro-3-deoxy-D-gluconate from pectin: step 2/5. Its function is as follows. Catalyzes the depolymerization of both polygalacturonate and pectins of methyl esterification degree from 22 to 89%, with an endo mode of action. In contrast to the majority of pectate lyases, displays high activity on highly methylated pectins. The sequence is that of Pectate lyase C (pelC) from Bacillus licheniformis (strain ATCC 14580 / DSM 13 / JCM 2505 / CCUG 7422 / NBRC 12200 / NCIMB 9375 / NCTC 10341 / NRRL NRS-1264 / Gibson 46).